The chain runs to 93 residues: DNA-directed RNA polymerase subunit omega (93 aa).

The protein belongs to the RNA polymerase subunit omega family. As to quaternary structure, the RNAP catalytic core consists of 2 alpha, 1 beta, 1 beta' and 1 omega subunit. When a sigma factor is associated with the core the holoenzyme is formed, which can initiate transcription.

It catalyses the reaction RNA(n) + a ribonucleoside 5'-triphosphate = RNA(n+1) + diphosphate. Functionally, promotes RNA polymerase assembly. Latches the N- and C-terminal regions of the beta' subunit thereby facilitating its interaction with the beta and alpha subunits. This is DNA-directed RNA polymerase subunit omega from Corynebacterium urealyticum (strain ATCC 43042 / DSM 7109).